Here is a 500-residue protein sequence, read N- to C-terminus: Cobyric acid synthase (500 aa).

Residues 255-444 (AIDIAVIRCP…MHDLFHNDAF (190 aa)) form the GATase cobBQ-type domain. The Nucleophile role is filled by Cys-337. His-436 is an active-site residue.

This sequence belongs to the CobB/CobQ family. CobQ subfamily.

It functions in the pathway cofactor biosynthesis; adenosylcobalamin biosynthesis. Catalyzes amidations at positions B, D, E, and G on adenosylcobyrinic A,C-diamide. NH(2) groups are provided by glutamine, and one molecule of ATP is hydrogenolyzed for each amidation. This is Cobyric acid synthase from Geobacillus thermodenitrificans (strain NG80-2).